We begin with the raw amino-acid sequence, 243 residues long: 1-(5-phosphoribosyl)-5-[(5-phosphoribosylamino)methylideneamino] imidazole-4-carboxamide isomerase (243 aa).

Catalysis depends on aspartate 8, which acts as the Proton acceptor. Aspartate 130 functions as the Proton donor in the catalytic mechanism.

Belongs to the HisA/HisF family.

It localises to the cytoplasm. The catalysed reaction is 1-(5-phospho-beta-D-ribosyl)-5-[(5-phospho-beta-D-ribosylamino)methylideneamino]imidazole-4-carboxamide = 5-[(5-phospho-1-deoxy-D-ribulos-1-ylimino)methylamino]-1-(5-phospho-beta-D-ribosyl)imidazole-4-carboxamide. It functions in the pathway amino-acid biosynthesis; L-histidine biosynthesis; L-histidine from 5-phospho-alpha-D-ribose 1-diphosphate: step 4/9. The chain is 1-(5-phosphoribosyl)-5-[(5-phosphoribosylamino)methylideneamino] imidazole-4-carboxamide isomerase from Saccharophagus degradans (strain 2-40 / ATCC 43961 / DSM 17024).